The sequence spans 705 residues: Kinesin-like protein KIF2A (705 aa).

The globular stretch occupies residues 1–216 (MATANFGKIQ…LDYRPLTTAD (216 aa)). A disordered region spans residues 65-186 (DLVPDEDIEP…QELREKRAQD (122 aa)). The residue at position 75 (Ser-75) is a Phosphoserine. Phosphothreonine is present on Thr-96. Position 101 is an N6-acetyllysine (Lys-101). The segment covering 122 to 139 (LPEQSSSAQQNGSVSDIS) has biased composition (polar residues). 2 positions are modified to phosphoserine: Ser-134 and Ser-139. A compositionally biased stretch (basic and acidic residues) spans 158–186 (CVKEVEKLQEKREKRRLQQQELREKRAQD). One can recognise a Kinesin motor domain in the interval 222 to 552 (RICVCVRKRP…LRYANRVKEL (331 aa)). 312–319 (GQTGSGKT) is an ATP binding site. Phosphoserine occurs at positions 528 and 545. The stretch at 659–698 (ATQLEAILEQKIDILTELRDKVKSFRAALQEEEQASKQIN) forms a coiled coil.

The protein belongs to the TRAFAC class myosin-kinesin ATPase superfamily. Kinesin family. MCAK/KIF2 subfamily. As to quaternary structure, interacts with AURKA and PLK1. Interacts with PSRC1. Interacts with MCRS1; the interaction enhances recruitment of KIF2A to the minus ends of spindle microtubules which promotes chromosome alignment. Highest level in lung. High level in ovary, moderate levels in heart, kidney, placenta, skeletal muscle and spleen (at protein level). Pancreas and spleen express a shorter isoform (at protein level). Expressed in the flagellum of elongated spermatids and sperm in the testis lumen (at protein level). Isoform 1 expressed in neuronal cells. Isoform 2 expressed in astrocytes and fibroblasts.

Its subcellular location is the cytoplasm. It localises to the cytoskeleton. The protein resides in the microtubule organizing center. It is found in the centrosome. The protein localises to the spindle pole. Its subcellular location is the spindle. It localises to the lysosome. Plus end-directed microtubule-dependent motor required for normal brain development. May regulate microtubule dynamics during axonal growth. Required for normal progression through mitosis. Required for normal congress of chromosomes at the metaphase plate. Required for normal spindle dynamics during mitosis. Promotes spindle turnover. Implicated in formation of bipolar mitotic spindles. Has microtubule depolymerization activity. In Mus musculus (Mouse), this protein is Kinesin-like protein KIF2A (Kif2a).